Here is a 291-residue protein sequence, read N- to C-terminus: Ribosomal RNA small subunit methyltransferase A (291 aa).

6 residues coordinate S-adenosyl-L-methionine: H21, L23, G48, E70, D95, and N115.

It belongs to the class I-like SAM-binding methyltransferase superfamily. rRNA adenine N(6)-methyltransferase family. RsmA subfamily.

It localises to the cytoplasm. The enzyme catalyses adenosine(1518)/adenosine(1519) in 16S rRNA + 4 S-adenosyl-L-methionine = N(6)-dimethyladenosine(1518)/N(6)-dimethyladenosine(1519) in 16S rRNA + 4 S-adenosyl-L-homocysteine + 4 H(+). Functionally, specifically dimethylates two adjacent adenosines (A1518 and A1519) in the loop of a conserved hairpin near the 3'-end of 16S rRNA in the 30S particle. May play a critical role in biogenesis of 30S subunits. The polypeptide is Ribosomal RNA small subunit methyltransferase A (Prochlorococcus marinus (strain NATL1A)).